The primary structure comprises 284 residues: Probable palmitoyltransferase ZDHHC24 (284 aa).

The Cytoplasmic portion of the chain corresponds to M1 to P18. A helical transmembrane segment spans residues L19–L39. Residues G40–A52 lie on the Extracellular side of the membrane. A helical membrane pass occupies residues L53–L73. Residues R74–R137 are Cytoplasmic-facing. One can recognise a DHHC domain in the interval A94 to L144. The active-site S-palmitoyl cysteine intermediate is the C124. A helical membrane pass occupies residues P138–G158. Topologically, residues P159 to R166 are extracellular. The helical transmembrane segment at A167–G187 threads the bilayer. Residues R188–D201 lie on the Cytoplasmic side of the membrane. Residues T202–L222 form a helical membrane-spanning segment. Over R223–S284 the chain is Extracellular.

Belongs to the DHHC palmitoyltransferase family.

The protein resides in the membrane. The enzyme catalyses L-cysteinyl-[protein] + hexadecanoyl-CoA = S-hexadecanoyl-L-cysteinyl-[protein] + CoA. Its function is as follows. Probable palmitoyltransferase that could catalyze the addition of palmitate onto various protein substrates. In Homo sapiens (Human), this protein is Probable palmitoyltransferase ZDHHC24.